The primary structure comprises 361 residues: MDVAALVSGGVDSSVVVHRLCEEGYKPAIFYIRIGMEDEDGYIDCPAEEDIELTTLIARRYGCPFEVVDLHKEYWERVVSYTVETVRRGLTPNPDMMCNKLIKFGCFEERWGYQFDRIATGHYATTDLLNGKTYLSTAKDPVKDQTDFLAQINFAQISKLMFPIGHLLKSEVRAIANAAGLPSAKRKDSQGICFLGKIDYNDFIERYLGKKEGRIIELETGKVIGRHQGYWFHTIGQRKGLGLSGGPWFVVKKDIKRNIILVSRGYDPDTQYGKTIEMETFDFITEDAYEAGYWNREDATPVTFKIRHTPEFTRGLLYKGEKGYRLESEERIQGIAPGQYCVIYDEDHHLCYGSGMITKGR.

ATP contacts are provided by residues 6–13 (LVSGGVDS) and Ile32. Residues 93-95 (NPD) are interaction with target base in tRNA. Cys98 serves as the catalytic Nucleophile. A disulfide bond links Cys98 and Cys193. Gly121 contacts ATP. The interaction with tRNA stretch occupies residues 143 to 145 (KDQ). The active-site Cysteine persulfide intermediate is Cys193.

This sequence belongs to the MnmA/TRMU family.

Its subcellular location is the cytoplasm. The enzyme catalyses S-sulfanyl-L-cysteinyl-[protein] + uridine(34) in tRNA + AH2 + ATP = 2-thiouridine(34) in tRNA + L-cysteinyl-[protein] + A + AMP + diphosphate + H(+). In terms of biological role, catalyzes the 2-thiolation of uridine at the wobble position (U34) of tRNA, leading to the formation of s(2)U34. This is tRNA-specific 2-thiouridylase MnmA from Porphyromonas gingivalis (strain ATCC 33277 / DSM 20709 / CIP 103683 / JCM 12257 / NCTC 11834 / 2561).